A 671-amino-acid polypeptide reads, in one-letter code: UvrABC system protein B (671 aa).

Residues 35-423 form the Helicase ATP-binding domain; it reads KAIIENKKHQ…NHQVVQQIIR (389 aa). 48-55 lines the ATP pocket; the sequence is GATGTGKT. A Beta-hairpin motif is present at residues 101 to 124; the sequence is NFDFFQPEAYIPSKDLYIDKDSRQ. One can recognise a Helicase C-terminal domain in the interval 440 to 602; sequence QIDDIINEIH…IVPKTISKAI (163 aa). Residues 632-667 form the UVR domain; sequence QQTIDNLRQEMLQAAKELDFERAAILRDTIIELENE.

The protein belongs to the UvrB family. Forms a heterotetramer with UvrA during the search for lesions. Interacts with UvrC in an incision complex.

The protein resides in the cytoplasm. Functionally, the UvrABC repair system catalyzes the recognition and processing of DNA lesions. A damage recognition complex composed of 2 UvrA and 2 UvrB subunits scans DNA for abnormalities. Upon binding of the UvrA(2)B(2) complex to a putative damaged site, the DNA wraps around one UvrB monomer. DNA wrap is dependent on ATP binding by UvrB and probably causes local melting of the DNA helix, facilitating insertion of UvrB beta-hairpin between the DNA strands. Then UvrB probes one DNA strand for the presence of a lesion. If a lesion is found the UvrA subunits dissociate and the UvrB-DNA preincision complex is formed. This complex is subsequently bound by UvrC and the second UvrB is released. If no lesion is found, the DNA wraps around the other UvrB subunit that will check the other stand for damage. The protein is UvrABC system protein B of Mycoplasma mycoides subsp. mycoides SC (strain CCUG 32753 / NCTC 10114 / PG1).